Reading from the N-terminus, the 561-residue chain is Urocanate hydratase (561 aa).

Residues 52 to 53 (GG), Gln130, 176 to 178 (GMG), Glu196, Arg201, 242 to 243 (NA), 263 to 267 (QTSAH), 273 to 274 (YL), and Tyr322 each bind NAD(+). The active site involves Cys410. Position 492 (Gly492) interacts with NAD(+).

Belongs to the urocanase family. NAD(+) serves as cofactor.

The protein localises to the cytoplasm. It catalyses the reaction 4-imidazolone-5-propanoate = trans-urocanate + H2O. It participates in amino-acid degradation; L-histidine degradation into L-glutamate; N-formimidoyl-L-glutamate from L-histidine: step 2/3. In terms of biological role, catalyzes the conversion of urocanate to 4-imidazolone-5-propionate. The polypeptide is Urocanate hydratase (Salmonella typhi).